The chain runs to 386 residues: Protein RecA (386 aa).

76–83 (GPESSGKT) serves as a coordination point for ATP. A disordered region spans residues 362 to 386 (FDDEDDDFDASTAPAGTFTEVTTEN).

This sequence belongs to the RecA family.

The protein localises to the cytoplasm. In terms of biological role, can catalyze the hydrolysis of ATP in the presence of single-stranded DNA, the ATP-dependent uptake of single-stranded DNA by duplex DNA, and the ATP-dependent hybridization of homologous single-stranded DNAs. It interacts with LexA causing its activation and leading to its autocatalytic cleavage. This is Protein RecA from Corynebacterium efficiens (strain DSM 44549 / YS-314 / AJ 12310 / JCM 11189 / NBRC 100395).